Reading from the N-terminus, the 539-residue chain is MPLNEKYERPPQPPPAYDPNHRPPSSSENSAAANVNDGQTPYHFRQDQYYNLNSKTSGAPIGSFDEAFPTENDNKPRWNDWPFTIFFLCTVGGFIAIAAITLRAWSQTYSSTGSGIYDGVNTGTLNTNAAILLVFVCIIALVFSVLGLTLCRIFPKQFIYCGMVINLVASLGTAIMYMSLRYWSAGIVFLVFTFMTAWCYWGMRSRIPLSVAVLKVVVDAMKKCPQIFFVSFVGALVASAFGFLFSAVIVATYIKYDPNSSNGGCDVSGGSCSHSKLIGVLVVVFFCGYYISEVIRNVIHCVISGVFGSWYYMSKSDQGMPRWPAFGALKRAMTYSFGSICFGSLLVALIDLLRQILQMIRHDVTSSGGGQIAIQILFMVFDWIIGFLKWLAEYFNHYAYSFIALYGKPYLRAAKETWYMLREKGMDALINDNLINIALGLFSMFASYMTALFTFLYLRFTSPQYNSNGAYNGALMAFSFVIALQICNIATEAIRSGTATFFVALGNDPEVFHHSYPHRFDEIFRAYPDVLRKLSHQNV.

The segment at 1-38 (MPLNEKYERPPQPPPAYDPNHRPPSSSENSAAANVNDG) is disordered. Topologically, residues 1-81 (MPLNEKYERP…NDNKPRWNDW (81 aa)) are cytoplasmic. Positions 25–36 (SSSENSAAANVN) are enriched in low complexity. A helical membrane pass occupies residues 82 to 102 (PFTIFFLCTVGGFIAIAAITL). Over 103-129 (RAWSQTYSSTGSGIYDGVNTGTLNTNA) the chain is Extracellular. A helical membrane pass occupies residues 130–150 (AILLVFVCIIALVFSVLGLTL). The Cytoplasmic segment spans residues 151–157 (CRIFPKQ). The chain crosses the membrane as a helical span at residues 158–178 (FIYCGMVINLVASLGTAIMYM). Topologically, residues 179-182 (SLRY) are extracellular. The helical transmembrane segment at 183-203 (WSAGIVFLVFTFMTAWCYWGM) threads the bilayer. At 204-226 (RSRIPLSVAVLKVVVDAMKKCPQ) the chain is on the cytoplasmic side. Residues 227–247 (IFFVSFVGALVASAFGFLFSA) traverse the membrane as a helical segment. Residues 248–274 (VIVATYIKYDPNSSNGGCDVSGGSCSH) are Extracellular-facing. The N-linked (GlcNAc...) asparagine glycan is linked to Asn259. A helical membrane pass occupies residues 275–295 (SKLIGVLVVVFFCGYYISEVI). Residues 296–332 (RNVIHCVISGVFGSWYYMSKSDQGMPRWPAFGALKRA) are Cytoplasmic-facing. The helical transmembrane segment at 333-353 (MTYSFGSICFGSLLVALIDLL) threads the bilayer. Residues 354-371 (RQILQMIRHDVTSSGGGQ) lie on the Extracellular side of the membrane. Residues 372 to 392 (IAIQILFMVFDWIIGFLKWLA) traverse the membrane as a helical segment. Residues 393-436 (EYFNHYAYSFIALYGKPYLRAAKETWYMLREKGMDALINDNLIN) are Cytoplasmic-facing. A helical membrane pass occupies residues 437–457 (IALGLFSMFASYMTALFTFLY). The Extracellular segment spans residues 458-473 (LRFTSPQYNSNGAYNG). A helical transmembrane segment spans residues 474–494 (ALMAFSFVIALQICNIATEAI). At 495-539 (RSGTATFFVALGNDPEVFHHSYPHRFDEIFRAYPDVLRKLSHQNV) the chain is on the cytoplasmic side.

It belongs to the CTL (choline transporter-like) family.

It localises to the cell membrane. In terms of biological role, probably involved in transport through the plasma membrane. This chain is Protein PNS1 (PNS1), found in Saccharomyces cerevisiae (strain ATCC 204508 / S288c) (Baker's yeast).